Consider the following 310-residue polypeptide: Putative HTH-type transcriptional regulatory protein SSO0942 (310 aa).

Residues 125–180 (LKHKREEMGYSIGDVAKFLGVSRKAIYDYEKGDSDVSLEVAEKLIDLFGDDIIGDV) enclose the HTH cro/C1-type domain. Residues 136 to 155 (IGDVAKFLGVSRKAIYDYEK) constitute a DNA-binding region (H-T-H motif).

In Saccharolobus solfataricus (strain ATCC 35092 / DSM 1617 / JCM 11322 / P2) (Sulfolobus solfataricus), this protein is Putative HTH-type transcriptional regulatory protein SSO0942.